The primary structure comprises 190 residues: MKNVSPSYLKHHFLIAMPHMADPNFAHTLTYIVEHTANGAMGLVVNRPQELNLADILEQLRPDIDPPALCQHVPIFIGGPVQTDRGFVLHPAGKTFQATVELEGDLALSTSQDVLFAIADGVGPAKSVITLGYAGWEAGQLEAELADNAWLTCPYDADILFNTSSELRLEAAARHLGINLSLLTSQAGHA.

It belongs to the UPF0301 (AlgH) family.

The polypeptide is UPF0301 protein Pfl01_5311 (Pseudomonas fluorescens (strain Pf0-1)).